The following is a 613-amino-acid chain: Cysteine--tRNA ligase (613 aa).

The interval M1–N130 is disordered. Tandem repeats lie at residues P36–V49, P50–V63, P64–V77, P78–V91, P92–V105, and P106–V119. The interval P36 to V119 is 6 X 14 AA tandem repeats of P-[TA]-R-G-D-K-K-R-A-[RP]-R-[PL]-G-V. Residues V148 to R613 are cysteinyl-tRNA synthetase. Position 176 (C176) interacts with Zn(2+). The 'HIGH' region signature appears at A178–H188. Residues C355, H380, and E384 each coordinate Zn(2+). Residues K411–S415 carry the 'KMSKS' region motif. K414 contacts ATP.

It belongs to the class-I aminoacyl-tRNA synthetase family. Monomer. It depends on Zn(2+) as a cofactor.

The protein localises to the cytoplasm. The catalysed reaction is tRNA(Cys) + L-cysteine + ATP = L-cysteinyl-tRNA(Cys) + AMP + diphosphate. In Streptomyces coelicolor (strain ATCC BAA-471 / A3(2) / M145), this protein is Cysteine--tRNA ligase.